The following is a 1939-amino-acid chain: Myosin-6 (1939 aa).

The Myosin N-terminal SH3-like domain occupies 32-81; it reads DIRTECFVPDDKEEFVKAKILSREGGKVIAETENGKTVTVKEDQVLQQNP. The region spanning 85-780 is the Myosin motor domain; sequence DKIEDMAMLT…LLGLLEEMRD (696 aa). N6,N6,N6-trimethyllysine is present on lysine 129. 178–185 is an ATP binding site; it reads GESGAGKT. At threonine 379 the chain carries Phosphothreonine. Serine 417 carries the phosphoserine modification. Actin-binding stretches follow at residues 657-679 and 759-773; these read LNKLMTNLRTTHPHFVRCIIPNE and KFGHTKVFFKAGLLG. Residues 783-812 enclose the IQ domain; the sequence is LSRIITRMQAQARGQLMRIEFKKIVERRDA. A coiled-coil region spans residues 842–1939; it reads LKSAETEKEM…GAKQKMHDEE (1098 aa). The residue at position 1139 (serine 1139) is a Phosphoserine. Tyrosine 1261 carries the post-translational modification Phosphotyrosine. Serine 1271 is modified (phosphoserine). Phosphothreonine is present on residues threonine 1277 and threonine 1284. Serine 1309 carries the post-translational modification Phosphoserine. Tyrosine 1310 carries the post-translational modification Phosphotyrosine. Threonine 1311 is subject to Phosphothreonine. A Phosphoserine modification is found at serine 1512. Threonine 1515 carries the post-translational modification Phosphothreonine. Basic and acidic residues-rich tracts occupy residues 1826 to 1837 and 1925 to 1939; these read GELEAEQKRNAE and KSRDIGAKQKMHDEE. 2 disordered regions span residues 1826-1849 and 1909-1939; these read GELEAEQKRNAESVKGMRKSERRI and EERADIAESQVNKLRAKSRDIGAKQKMHDEE.

It belongs to the TRAFAC class myosin-kinesin ATPase superfamily. Myosin family. In terms of assembly, muscle myosin is a hexameric protein that consists of 2 heavy chain subunits (MHC), 2 alkali light chain subunits (MLC) and 2 regulatory light chain subunits (MLC-2).

The protein resides in the cytoplasm. It is found in the myofibril. Its function is as follows. Muscle contraction. The chain is Myosin-6 (MYH6) from Homo sapiens (Human).